A 146-amino-acid chain; its full sequence is Snaclec anticoagulant protein subunit B (146 aa).

A signal peptide spans methionine 1–alanine 23. The C-type lectin domain maps to aspartate 24–alanine 146. Disulfide bonds link cysteine 25-cysteine 36, cysteine 53-cysteine 142, and cysteine 119-cysteine 134. Serine 64, glutamine 66, and glutamate 70 together coordinate Ca(2+). Glutamate 143 contributes to the Ca(2+) binding site.

This sequence belongs to the snaclec family. As to quaternary structure, heterodimer with subunit A of agkisacutacin or AaACP; disulfide-linked. In terms of tissue distribution, expressed by the venom gland.

The protein localises to the secreted. Anticoagulant protein which binds to the gamma-carboxyglutamic acid-domain regions of factors IX and factor X in the presence of calcium with a 1 to 1 stoichiometry. Also inhibits platelet aggregation by binding to platelet glycoprotein Ibalpha (GP1BA) and functioning as a blocker of vWF. Is devoid of hemorrhagic and lethal activities. Possesses antithrombotic and thrombolytic activities. Also hydrolyzes the Aalpha-chain of fibrinogen. Does not affect the Bbeta-chain and the gamma chain. The protein is Snaclec anticoagulant protein subunit B of Deinagkistrodon acutus (Hundred-pace snake).